Consider the following 225-residue polypeptide: Ribonuclease 3 (225 aa).

The RNase III domain occupies 5-127 (VTELYKTIDY…IIGAVFLDSD (123 aa)). Residue Glu40 participates in Mg(2+) binding. The active site involves Asp44. Mg(2+) is bound by residues Asp113 and Glu116. Glu116 is an active-site residue. The 70-residue stretch at 154 to 223 (DPKTLLQEHL…AEKALKILKN (70 aa)) folds into the DRBM domain.

It belongs to the ribonuclease III family. Homodimer. Mg(2+) is required as a cofactor.

It localises to the cytoplasm. The catalysed reaction is Endonucleolytic cleavage to 5'-phosphomonoester.. Its function is as follows. Digests double-stranded RNA. Involved in the processing of primary rRNA transcript to yield the immediate precursors to the large and small rRNAs (23S and 16S). Processes some mRNAs, and tRNAs when they are encoded in the rRNA operon. Processes pre-crRNA and tracrRNA of type II CRISPR loci if present in the organism. This chain is Ribonuclease 3, found in Pseudoalteromonas translucida (strain TAC 125).